Consider the following 480-residue polypeptide: EGF-like repeat and discoidin I-like domain-containing protein 3 (480 aa).

The N-terminal stretch at 1–23 (MKHLVAAWLLVGLSLGVPQFGKG) is a signal peptide. Positions 24-60 (DICNPNPCENGGICLSGLADDSFSCECPEGFAGPNCS) constitute an EGF-like 1 domain. Disulfide bonds link Cys26–Cys37, Cys31–Cys48, and Cys50–Cys59. Thr73 carries an O-linked (GalNAc...) threonine glycan. EGF-like domains follow at residues 74–117 (SAGP…IHCQ) and 119–155 (NINECEAEPCRNGGICTDLVANYSCECPGEFMGRNCQ). 3 disulfide bridges follow: Cys78–Cys89, Cys83–Cys105, and Cys107–Cys116. An O-linked (Fuc...) threonine glycan is attached at Thr88. Residues 96–98 (RGD) carry the Cell attachment site motif. Ca(2+) is bound by residues Asn119, Ile120, and Glu122. 6 disulfide bridges follow: Cys123/Cys134, Cys128/Cys143, Cys145/Cys154, Cys158/Cys314, Cys301/Cys305, and Cys319/Cys476. 2 residues coordinate Ca(2+): Asp136 and Leu137. Asn140 is a glycosylation site (N-linked (GlcNAc...) asparagine). F5/8 type C domains follow at residues 158-314 (CSGP…LLGC) and 319-476 (CSEP…LLGC).

As to expression, expressed in angioblasts and early endothelial cells. By embryonic day 13.5, also expressed in a restricted group of non-endothelial cells including chondrocytes and retinal neurons.

Its subcellular location is the secreted. Promotes adhesion of endothelial cells through interaction with the alpha-v/beta-3 integrin receptor. Inhibits formation of vascular-like structures. May be involved in regulation of vascular morphogenesis of remodeling in embryonic development. This is EGF-like repeat and discoidin I-like domain-containing protein 3 (Edil3) from Mus musculus (Mouse).